A 486-amino-acid polypeptide reads, in one-letter code: Glutamyl-tRNA(Gln) amidotransferase subunit A (486 aa).

Catalysis depends on charge relay system residues Lys-76 and Ser-151. Catalysis depends on Ser-175, which acts as the Acyl-ester intermediate.

This sequence belongs to the amidase family. GatA subfamily. As to quaternary structure, heterotrimer of A, B and C subunits.

The catalysed reaction is L-glutamyl-tRNA(Gln) + L-glutamine + ATP + H2O = L-glutaminyl-tRNA(Gln) + L-glutamate + ADP + phosphate + H(+). In terms of biological role, allows the formation of correctly charged Gln-tRNA(Gln) through the transamidation of misacylated Glu-tRNA(Gln) in organisms which lack glutaminyl-tRNA synthetase. The reaction takes place in the presence of glutamine and ATP through an activated gamma-phospho-Glu-tRNA(Gln). In Marinomonas sp. (strain MWYL1), this protein is Glutamyl-tRNA(Gln) amidotransferase subunit A.